The chain runs to 555 residues: Glucose-6-phosphate isomerase (555 aa).

Glutamate 356 serves as the catalytic Proton donor. Residues histidine 387 and lysine 515 contribute to the active site.

The protein belongs to the GPI family.

It is found in the cytoplasm. The enzyme catalyses alpha-D-glucose 6-phosphate = beta-D-fructose 6-phosphate. It functions in the pathway carbohydrate biosynthesis; gluconeogenesis. The protein operates within carbohydrate degradation; glycolysis; D-glyceraldehyde 3-phosphate and glycerone phosphate from D-glucose: step 2/4. Its function is as follows. Catalyzes the reversible isomerization of glucose-6-phosphate to fructose-6-phosphate. The polypeptide is Glucose-6-phosphate isomerase (Desulforapulum autotrophicum (strain ATCC 43914 / DSM 3382 / VKM B-1955 / HRM2) (Desulfobacterium autotrophicum)).